The sequence spans 242 residues: Triosephosphate isomerase (242 aa).

Substrate is bound at residue 9-11 (NWK). Residue His-96 is the Electrophile of the active site. Glu-165 acts as the Proton acceptor in catalysis. Residues Gly-171, Ser-204, and 225–226 (GG) each bind substrate.

The protein belongs to the triosephosphate isomerase family. As to quaternary structure, homodimer.

It localises to the cytoplasm. The catalysed reaction is D-glyceraldehyde 3-phosphate = dihydroxyacetone phosphate. Its pathway is carbohydrate biosynthesis; gluconeogenesis. It participates in carbohydrate degradation; glycolysis; D-glyceraldehyde 3-phosphate from glycerone phosphate: step 1/1. Its function is as follows. Involved in the gluconeogenesis. Catalyzes stereospecifically the conversion of dihydroxyacetone phosphate (DHAP) to D-glyceraldehyde-3-phosphate (G3P). The chain is Triosephosphate isomerase from Synechocystis sp. (strain ATCC 27184 / PCC 6803 / Kazusa).